Consider the following 1020-residue polypeptide: MLISKTVLSGLALGASFVGVSAQQNSTRWPLHDNGLTDTVEWDHYSFLINGQRHFVFSGEFHYWRIPVPELWRDLLEKIKAAGFTAFSIYNHWGYHSPKPGVLDFENGAHNFTSIMTLAKEIGLYMIIRPGPYVNAEANAGGLPLWTTTGAYGKLRDNDPRYLEALTPYWANISKIIAPHLITNGGNVILYQIENEYAEQWLDEETHEPNTSGQEYMQYLEDVARENGIDAPLIHNLPNMNGHSWSKDLSNATGNVDVIGVDSYPTCWTCNVSECASTNGEYIPYKTLIYYDYFKELSPTQPSFMPEFQGGSYNPWGGPQGGCPDDLGPDFANLFYRNLISQRVSAISLYMLYGGTNWGWHASTDVATSYDYSSPISENRKLIEKYYETKVLTQFTKIAQDLSKVDRLGNSTKYSSNPAVSVAELRNPDTGAAFYVTQHEYTPSGTVEKFTVKVNTSEGALTIPQYGSQITLNGHQSKIIVTDFKFGSKTLLYSTAEVLTYAVIDGKEVLALWVPTGESGEFTVKGVNSAKFADKGRTANIEIHPGANNVTVSFMQRSGMSLVELGDGTRIVLLDRSAAHVFWSTPLNNDPAEAGNNTVLVHGPYLVRSAKLEGCDLKLTGDIQNSTEVSIFAPKSVCSVNWNGKKTSVKSAKGGVITTTLGGDAKFELPTISGWKSADSLPEIAKDYSATSKAWVVATKTNSSNPTPPAPNNPVLYVDENDIHVGNHIYRATFPSTDEPPTDVYLNITGGRAFSYSVWLNSDFIGSWLGTATTEQNDQTFSFSNATLSTDEDNILVVVMDNSAHDLRDGALNPRGITNATLIGPGSYSFTEWKLAGNAGFEDHLDPVRAPLNEGSLYAERVGIHLPGYEFDEAEEVSSNSTSLTVPGAGIRVFRTVVPLSVPQGLDVSISFRLTAPSNVTFTSAEGYTNQLRALLFVNGYQYGRFNPYIGHQIDFPVPPGVLDYNGDNTIAVTVWSQSVDGAEIKVDWNVDYVHETSFDMNFDGAYLRPGWIEERREYA.

Positions 1-22 (MLISKTVLSGLALGASFVGVSA) are cleaved as a signal peptide. The N-linked (GlcNAc...) asparagine glycan is linked to Asn-25. Tyr-90 lines the substrate pocket. N-linked (GlcNAc...) asparagine glycosylation occurs at Asn-111. Substrate contacts are provided by Asn-135, Ala-136, and Glu-137. The N-linked (GlcNAc...) asparagine glycan is linked to Asn-172. Asn-195 provides a ligand contact to substrate. The active-site Proton donor is the Glu-196. Asn-210 and Asn-251 each carry an N-linked (GlcNAc...) asparagine glycan. Residue Tyr-264 participates in substrate binding. A disulfide bond links Cys-270 and Cys-323. The N-linked (GlcNAc...) asparagine glycan is linked to Asn-271. The Nucleophile role is filled by Glu-307. A substrate-binding site is contributed by Tyr-372. N-linked (GlcNAc...) asparagine glycosylation is found at Asn-410, Asn-455, Asn-549, Asn-596, Asn-625, Asn-702, Asn-747, Asn-785, Asn-819, Asn-880, and Asn-919.

The protein belongs to the glycosyl hydrolase 35 family.

The protein resides in the secreted. The enzyme catalyses Hydrolysis of terminal non-reducing beta-D-galactose residues in beta-D-galactosides.. Functionally, cleaves beta-linked terminal galactosyl residues from gangliosides, glycoproteins, and glycosaminoglycans. This Aspergillus flavus (strain ATCC 200026 / FGSC A1120 / IAM 13836 / NRRL 3357 / JCM 12722 / SRRC 167) protein is Probable beta-galactosidase B (lacB).